The primary structure comprises 530 residues: TNF receptor-associated factor 6 (530 aa).

Residues 1–362 (MSLLNCENSC…EAQQCNGIYI (362 aa)) form an interaction with TAX1BP1 region. Residues 70-109 (CPICLMALREAVQTPCGHRFCKACIIKSIRDAGHKCPVDN) form an RING-type zinc finger. A Glycyl lysine isopeptide (Lys-Gly) (interchain with G-Cter in SUMO); alternate cross-link involves residue Lys124. Lys124 participates in a covalent cross-link: Glycyl lysine isopeptide (Lys-Gly) (interchain with G-Cter in ubiquitin); alternate. A Glycyl lysine isopeptide (Lys-Gly) (interchain with G-Cter in SUMO) cross-link involves residue Lys142. TRAF-type zinc fingers lie at residues 150–202 (DHQV…EEKE) and 203–259 (IHDQ…NHLA). The stretch at 299–356 (EDPNYEETIKQLESRLVRQDHQIRELTAKMETQSMYVGELKRTIRTLEDKVAEMEAQQ) forms a coiled coil. Lys327 is covalently cross-linked (Glycyl lysine isopeptide (Lys-Gly) (interchain with G-Cter in ubiquitin)). One can recognise an MATH domain in the interval 358-507 (NGIYIWKIGN…DDTLLVRCEV (150 aa)). The interaction with TANK stretch occupies residues 363–530 (WKIGNFGMHL…FQPRSTDAGV (168 aa)). Lys461 is covalently cross-linked (Glycyl lysine isopeptide (Lys-Gly) (interchain with G-Cter in SUMO)).

The protein belongs to the TNF receptor-associated factor family. A subfamily. In terms of assembly, homotrimer. Homooligomer. N-terminal region is dimeric while C-terminal region is trimeric; maybe providing a mode of oligomerization. Upon IL1B treatment, forms a complex with PELI1, IRAK1, IRAK4 and MYD88; this complex recruits MAP3K7/TAK1, TAB1 and TAB2 to mediate NF-kappa-B activation. Direct binding of SMAD6 to PELI1 prevents the complex formation and hence negatively regulates IL1R-TLR signaling and eventually NF-kappa-B-mediated gene expression. Binds to TNFRSF5/CD40 and TNFRSF11A/RANK. Associates with NGFR, TNFRSF17, IRAK2, IRAK3, PELI2, PELI3, RIPK2, MAP3K1, MAP3K5, MAP3K14, CSK, TRAF, TRAF-interacting protein TRIP and TNF receptor associated protein TDP2. Binds UBE2V1. Interacts with MAVS/IPS1. Interacts with TAX1BP1; this interaction mediates deubiquitination of TRAF6 and inhibition of NF-kappa-B activation. Interacts with IL17R. Interacts with SQSTM1 bridging NTRK1 and NGFR. Forms a ternary complex with SQSTM1 and PRKCZ. Interacts with IL1RL1. Interacts with AJUBA. Interacts with TRAFD1. Interacts with TICAM2. Interacts with ZFAND5. Interacts with ARRB1 and ARRB2. Interacts with MAP3K7 and TAB1/MAP3K7IP1; during IL-1 signaling. Interacts with UBE2N. Interacts with TGFBR1, HDAC1 and RANGAP1. Interacts with AKT1, AKT2 and AKT3. Interacts (via TRAF domains) with NUMBL (via C-terminal). Interacts (via TRAF domains) with DYNC2I2 (via WD domains). Interacts with RBCK1. Interacts with LIMD1 (via LIM domains). Interacts with RSAD2/viperin. Interacts with IFIT3 (via N-terminus). Interacts (via C-terminus) with EIF2AK2/PKR (via the kinase catalytic domain). Interacts with CARD14. Interacts with CD40 and MAP3K8; the interaction is required for ERK activation. Interacts with TICAM1 and this interaction is enhanced in the presence of WDFY1. Interacts with TANK; this interaction increases in response to DNA damage. Interacts with USP10; this interaction increases in response to DNA damage. Interacts with ZC3H12A; this interaction increases in response to DNA damage and is stimulated by TANK. Interacts with WDFY3. Interacts with TRIM13. Interacts with GPS2. Interacts (via C-terminus) with SASH1. Interacts with LRRC19. Interacts with IL17RA and TRAF3IP2. Interacts with TOMM70. Interacts with AMBRA1; interaction is required to mediate 'Lys-63'-linked ubiquitination of ULK1. Interacts with CRBN; this interaction inhibits TLR4-mediated signaling by preventing TRAF6-mediated ubiquitination of ECSIT. (Microbial infection) Interacts (via N-terminal RING domain) with Toxoplasma gondii GRA7; the interaction plays a role in GRA7-induced pro-inflammatory cytokine production in mouse macrophages. In terms of processing, sumoylated on Lys-124, Lys-142 and Lys-461 with SUMO1. Polyubiquitinated on Lys-124 by TRAF3IP2; after cell stimulation with IL17A. Polyubiquitinated; after cell stimulation with IL1B or TGFB. This ligand-induced cell stimulation leads to dimerization/oligomerization of TRAF6 molecules, followed by auto-ubiquitination which involves UBE2N and UBE2V1 and leads to TRAF6 activation. This 'Lys-63' site-specific poly-ubiquitination appears to be associated with the activation of signaling molecules. Endogenous autoubiquitination occurs only for the cytoplasmic form. Deubiquitinated by USP10 in a TANK-dependent manner, leading to the negative regulation of NF-kappa-B signaling upon DNA damage. LRRC19 induces 'Lys-63' ubiquitination. Ubiquitinated at Lys-327 by the SCF(FBXL2) complex, leading to its degradation by the proteasome. In terms of tissue distribution, highly expressed in brain, lung, liver, skeletal muscle, and kidney; lower expression in heart, spleen, and testis.

The protein resides in the cytoplasm. The protein localises to the cell cortex. Its subcellular location is the nucleus. It localises to the lipid droplet. It carries out the reaction S-ubiquitinyl-[E2 ubiquitin-conjugating enzyme]-L-cysteine + [acceptor protein]-L-lysine = [E2 ubiquitin-conjugating enzyme]-L-cysteine + N(6)-ubiquitinyl-[acceptor protein]-L-lysine.. It functions in the pathway protein modification; protein ubiquitination. Its function is as follows. E3 ubiquitin ligase that, together with UBE2N and UBE2V1, mediates the synthesis of 'Lys-63'-linked-polyubiquitin chains conjugated to proteins, such as ECSIT, IKBKG, IRAK1, AKT1 and AKT2. Also mediates ubiquitination of free/unanchored polyubiquitin chain that leads to MAP3K7 activation. Leads to the activation of NF-kappa-B and JUN. Seems to also play a role in dendritic cells (DCs) maturation and/or activation. Represses c-Myb-mediated transactivation, in B-lymphocytes. Adapter protein that seems to play a role in signal transduction initiated via TNF receptor, IL-1 receptor and IL-17 receptor. Regulates osteoclast differentiation by mediating the activation of adapter protein complex 1 (AP-1) and NF-kappa-B, in response to RANK-L stimulation. Together with MAP3K8, mediates CD40 signals that activate ERK in B-cells and macrophages, and thus may play a role in the regulation of immunoglobulin production. Acts as a regulator of the JNK and NF-kappa-B signaling pathways by initiating assembly of heterotypic 'Lys-63'-/'Lys-48'-linked branched ubiquitin chains that are then recognized by TAB2: TRAF6 catalyzes initial 'Lys-63'-linked-polyubiquitin chains that are then branched via 'Lys-48'-linked polyubiquitin by HUWE1. 'Lys-63'-/'Lys-48'-linked branched ubiquitin chains protect 'Lys-63'-linkages from CYLD deubiquitination. Also participates in the TCR signaling by ubiquitinating LAT. The protein is TNF receptor-associated factor 6 (Traf6) of Mus musculus (Mouse).